The primary structure comprises 326 residues: Protein C10 (326 aa).

This sequence belongs to the poxviridae C4/C10 protein family.

The sequence is that of Protein C10 from Homo sapiens (Human).